Reading from the N-terminus, the 456-residue chain is Phospholipase A1 member A (456 aa).

An N-terminal signal peptide occupies residues 1–25; the sequence is MPPDFWERCFWLWGLLLWLSVGSTG. A glycan (N-linked (GlcNAc...) asparagine) is linked at Asn-34. Ser-166 functions as the Nucleophile in the catalytic mechanism. The active-site Charge relay system is the Asp-190. Cys-245 and Cys-258 are disulfide-bonded. The Charge relay system role is filled by His-260. 2 disulfides stabilise this stretch: Cys-282–Cys-293 and Cys-296–Cys-304.

This sequence belongs to the AB hydrolase superfamily. Lipase family.

The protein localises to the secreted. The catalysed reaction is a 1,2-diacyl-sn-glycero-3-phospho-L-serine + H2O = a 2-acyl-sn-glycero-3-phospho-L-serine + a fatty acid + H(+). It catalyses the reaction 1,2-di-(9Z)-octadecenoyl-sn-glycero-3-phospho-L-serine + H2O = 2-(9Z-octadecenoyl)-sn-glycero-3-phospho-L-serine + (9Z)-octadecenoate + H(+). The enzyme catalyses 1-hexadecanoyl-2-(5Z,8Z,11Z,14Z-eicosatetraenoyl)-sn-glycero-3-phospho-L-serine + H2O = 2-(5Z,8Z,11Z,14Z)-eicosatetraenoyl-sn-glycero-3-phospho-L-serine + hexadecanoate + H(+). It carries out the reaction a 1-acyl-sn-glycero-3-phospho-L-serine + H2O = sn-glycero-3-phospho-L-serine + a fatty acid + H(+). The catalysed reaction is 1-(9Z-octadecenoyl)-sn-glycero-3-phospho-L-serine + H2O = sn-glycero-3-phospho-L-serine + (9Z)-octadecenoate + H(+). Its function is as follows. Hydrolyzes the ester bond of the acyl group attached at the sn-1 position of phosphatidylserines (phospholipase A1 activity) and 1-acyl-2-lysophosphatidylserines (lysophospholipase activity) in the pathway of phosphatidylserines acyl chain remodeling. Cleaves phosphatidylserines exposed on the outer leaflet of the plasma membrane of apoptotic cells producing 2-acyl-1-lysophosphatidylserines, which in turn enhance mast cell activation and histamine production. Has no activity toward other glycerophospholipids including phosphatidylcholines, phosphatidylethanolamines, phosphatidic acids or phosphatidylinositols, or glycerolipids such as triolein. The sequence is that of Phospholipase A1 member A (PLA1A) from Bos taurus (Bovine).